A 161-amino-acid chain; its full sequence is Lipid droplet assembly factor 1 (161 aa).

Residues M1–Q43 lie on the Cytoplasmic side of the membrane. The chain crosses the membrane as a helical span at residues Y44–M61. Residues S62–G67 are Lumenal-facing. The helical transmembrane segment at F68–L87 threads the bilayer. Topologically, residues E88–S93 are cytoplasmic. Residues V94–S110 form a helical membrane-spanning segment. Over L111 to M116 the chain is Lumenal. The helical transmembrane segment at M117–S133 threads the bilayer. Over P134–E161 the chain is Cytoplasmic.

It belongs to the LDAF1 family. In terms of assembly, interacts with isoform 1 and isoform 3 of BSCL2/seipin to form an oligomeric complex. Expressed at high levels in the heart and skeletal muscle. Expressed at low levels in kidney, small intestine, lung and liver.

It localises to the endoplasmic reticulum membrane. The protein localises to the lipid droplet. Its function is as follows. Plays an important role in the formation of lipid droplets (LD) which are storage organelles at the center of lipid and energy homeostasis. In association with BSCL2/seipin, defines the sites of LD formation in the endoplasmic reticulum. This Homo sapiens (Human) protein is Lipid droplet assembly factor 1.